The following is a 251-amino-acid chain: Malonyl-[acyl-carrier protein] O-methyltransferase (251 aa).

This sequence belongs to the methyltransferase superfamily.

The enzyme catalyses malonyl-[ACP] + S-adenosyl-L-methionine = malonyl-[ACP] methyl ester + S-adenosyl-L-homocysteine. It participates in cofactor biosynthesis; biotin biosynthesis. Converts the free carboxyl group of a malonyl-thioester to its methyl ester by transfer of a methyl group from S-adenosyl-L-methionine (SAM). It allows to synthesize pimeloyl-ACP via the fatty acid synthetic pathway. This chain is Malonyl-[acyl-carrier protein] O-methyltransferase, found in Enterobacter lignolyticus (strain SCF1).